A 237-amino-acid chain; its full sequence is Uracil-DNA glycosylase (237 aa).

D77 serves as the catalytic Proton acceptor.

This sequence belongs to the uracil-DNA glycosylase (UDG) superfamily. UNG family.

It localises to the cytoplasm. The catalysed reaction is Hydrolyzes single-stranded DNA or mismatched double-stranded DNA and polynucleotides, releasing free uracil.. Excises uracil residues from the DNA which can arise as a result of misincorporation of dUMP residues by DNA polymerase or due to deamination of cytosine. The chain is Uracil-DNA glycosylase from Acinetobacter baylyi (strain ATCC 33305 / BD413 / ADP1).